Consider the following 186-residue polypeptide: dITP/XTP pyrophosphatase (186 aa).

7-12 provides a ligand contact to substrate; that stretch reads TSNPGK. Positions 36 and 65 each coordinate Mg(2+). The active-site Proton acceptor is Asp65. Substrate is bound by residues Ser66, 140–143, Lys163, and 168–169; these read FGYD and HR.

It belongs to the HAM1 NTPase family. Homodimer. Mg(2+) serves as cofactor. The cofactor is Mn(2+).

It catalyses the reaction XTP + H2O = XMP + diphosphate + H(+). The enzyme catalyses dITP + H2O = dIMP + diphosphate + H(+). It carries out the reaction ITP + H2O = IMP + diphosphate + H(+). Pyrophosphatase that catalyzes the hydrolysis of nucleoside triphosphates to their monophosphate derivatives, with a high preference for the non-canonical purine nucleotides XTP (xanthosine triphosphate), dITP (deoxyinosine triphosphate) and ITP. Seems to function as a house-cleaning enzyme that removes non-canonical purine nucleotides from the nucleotide pool, thus preventing their incorporation into DNA/RNA and avoiding chromosomal lesions. The chain is dITP/XTP pyrophosphatase from Pyrococcus horikoshii (strain ATCC 700860 / DSM 12428 / JCM 9974 / NBRC 100139 / OT-3).